Here is a 136-residue protein sequence, read N- to C-terminus: Class I hydrophobin 16 (136 aa).

The N-terminal stretch at methionine 1–alanine 19 is a signal peptide. Intrachain disulfides connect cysteine 58/cysteine 115, cysteine 65/cysteine 109, cysteine 66/cysteine 99, and cysteine 116/cysteine 129. Asparagine 74 carries an N-linked (GlcNAc...) asparagine glycan.

It belongs to the fungal hydrophobin family. In terms of assembly, self-assembles to form functional amyloid fibrils called rodlets. Self-assembly into fibrillar rodlets occurs spontaneously at hydrophobic:hydrophilic interfaces and the rodlets further associate laterally to form amphipathic monolayers.

The protein localises to the secreted. Its subcellular location is the cell wall. In terms of biological role, aerial growth, conidiation, and dispersal of filamentous fungi in the environment rely upon a capability of their secreting small amphipathic proteins called hydrophobins (HPBs) with low sequence identity. Class I can self-assemble into an outermost layer of rodlet bundles on aerial cell surfaces, conferring cellular hydrophobicity that supports fungal growth, development and dispersal; whereas Class II form highly ordered films at water-air interfaces through intermolecular interactions but contribute nothing to the rodlet structure. Hydph16 is a class I hydrophobin that has specific functions in aerial mycelium formation, cell wall stress protection, and cell wall structure formation, but does not seem to be involved in mycelial hydrophobicity. Specifically functions in resisting cell wall synthesis inhibitors. This Pleurotus ostreatus (strain PC15) (Oyster mushroom) protein is Class I hydrophobin 16.